Reading from the N-terminus, the 170-residue chain is Lipoprotein signal peptidase (170 aa).

Transmembrane regions (helical) follow at residues 12 to 32 (WYWV…WVLS), 67 to 87 (WQRW…SVWL), and 94 to 113 (MWRL…GNLI). Catalysis depends on residues aspartate 123 and aspartate 141. Residues 139-159 (IADSAICVGAGLIILDSFVAG) traverse the membrane as a helical segment.

This sequence belongs to the peptidase A8 family.

It localises to the cell inner membrane. It carries out the reaction Release of signal peptides from bacterial membrane prolipoproteins. Hydrolyzes -Xaa-Yaa-Zaa-|-(S,diacylglyceryl)Cys-, in which Xaa is hydrophobic (preferably Leu), and Yaa (Ala or Ser) and Zaa (Gly or Ala) have small, neutral side chains.. It functions in the pathway protein modification; lipoprotein biosynthesis (signal peptide cleavage). This protein specifically catalyzes the removal of signal peptides from prolipoproteins. The polypeptide is Lipoprotein signal peptidase (Shewanella pealeana (strain ATCC 700345 / ANG-SQ1)).